Reading from the N-terminus, the 153-residue chain is 6,7-dimethyl-8-ribityllumazine synthase (153 aa).

5-amino-6-(D-ribitylamino)uracil is bound by residues phenylalanine 22, 56-58 (AFE), and 80-82 (TVI). 85 to 86 (ST) is a binding site for (2S)-2-hydroxy-3-oxobutyl phosphate. Residue histidine 88 is the Proton donor of the active site. Phenylalanine 113 is a 5-amino-6-(D-ribitylamino)uracil binding site. Arginine 127 contributes to the (2S)-2-hydroxy-3-oxobutyl phosphate binding site.

Belongs to the DMRL synthase family. Forms an icosahedral capsid composed of 60 subunits, arranged as a dodecamer of pentamers.

The enzyme catalyses (2S)-2-hydroxy-3-oxobutyl phosphate + 5-amino-6-(D-ribitylamino)uracil = 6,7-dimethyl-8-(1-D-ribityl)lumazine + phosphate + 2 H2O + H(+). It functions in the pathway cofactor biosynthesis; riboflavin biosynthesis; riboflavin from 2-hydroxy-3-oxobutyl phosphate and 5-amino-6-(D-ribitylamino)uracil: step 1/2. Functionally, catalyzes the formation of 6,7-dimethyl-8-ribityllumazine by condensation of 5-amino-6-(D-ribitylamino)uracil with 3,4-dihydroxy-2-butanone 4-phosphate. This is the penultimate step in the biosynthesis of riboflavin. This Haemophilus ducreyi (strain 35000HP / ATCC 700724) protein is 6,7-dimethyl-8-ribityllumazine synthase.